Consider the following 67-residue polypeptide: Inosine/xanthosine triphosphatase (67 aa).

It belongs to the YjjX NTPase family. In terms of assembly, homodimer. Requires Mg(2+) as cofactor. Mn(2+) is required as a cofactor.

The enzyme catalyses XTP + H2O = XDP + phosphate + H(+). The catalysed reaction is ITP + H2O = IDP + phosphate + H(+). Functionally, phosphatase that hydrolyzes non-canonical purine nucleotides such as XTP and ITP to their respective diphosphate derivatives. Probably excludes non-canonical purines from DNA/RNA precursor pool, thus preventing their incorporation into DNA/RNA and avoiding chromosomal lesions. The chain is Inosine/xanthosine triphosphatase from Enterobacter cloacae.